Consider the following 191-residue polypeptide: Protein GrpE (191 aa).

It belongs to the GrpE family. As to quaternary structure, homodimer.

It localises to the cytoplasm. Its function is as follows. Participates actively in the response to hyperosmotic and heat shock by preventing the aggregation of stress-denatured proteins, in association with DnaK and GrpE. It is the nucleotide exchange factor for DnaK and may function as a thermosensor. Unfolded proteins bind initially to DnaJ; upon interaction with the DnaJ-bound protein, DnaK hydrolyzes its bound ATP, resulting in the formation of a stable complex. GrpE releases ADP from DnaK; ATP binding to DnaK triggers the release of the substrate protein, thus completing the reaction cycle. Several rounds of ATP-dependent interactions between DnaJ, DnaK and GrpE are required for fully efficient folding. The protein is Protein GrpE of Listeria welshimeri serovar 6b (strain ATCC 35897 / DSM 20650 / CCUG 15529 / CIP 8149 / NCTC 11857 / SLCC 5334 / V8).